A 402-amino-acid chain; its full sequence is uncharacterized protein (402 aa).

Helical transmembrane passes span 26 to 46 (IFMS…AIAY), 67 to 87 (VALA…YVGF), 96 to 116 (FAAF…LTII), 126 to 146 (TVSI…NGTL), 168 to 188 (LFIL…IGFL), 213 to 233 (YVAY…MIDS), 235 to 255 (LFLL…GGYG), 289 to 309 (PIVI…GSII), 312 to 332 (ISVF…FDSL), 338 to 358 (FKNI…AVTI), 360 to 380 (FALL…SFLL), and 381 to 401 (LYKK…GYLI).

This sequence belongs to the chromate ion transporter (CHR) (TC 2.A.51) family.

The protein localises to the cell membrane. This is an uncharacterized protein from Methanocaldococcus jannaschii (strain ATCC 43067 / DSM 2661 / JAL-1 / JCM 10045 / NBRC 100440) (Methanococcus jannaschii).